An 85-amino-acid polypeptide reads, in one-letter code: UPF0291 protein SGO_0570 (85 aa).

The segment at glutamate 56 to serine 85 is disordered. Residues threonine 62–serine 85 show a composition bias toward basic and acidic residues.

Belongs to the UPF0291 family.

The protein localises to the cytoplasm. This chain is UPF0291 protein SGO_0570, found in Streptococcus gordonii (strain Challis / ATCC 35105 / BCRC 15272 / CH1 / DL1 / V288).